The primary structure comprises 290 residues: Small ribosomal subunit biogenesis GTPase RsgA (290 aa).

One can recognise a CP-type G domain in the interval 62–213; that stretch reads KNSLVRPPIV…IADTPGFSSL (152 aa). Residues 111 to 114 and 156 to 164 each bind GTP; these read SKTD and GQTGVGKTT. Zn(2+) contacts are provided by C237, C242, H244, and C250.

This sequence belongs to the TRAFAC class YlqF/YawG GTPase family. RsgA subfamily. As to quaternary structure, monomer. Associates with 30S ribosomal subunit, binds 16S rRNA. Zn(2+) serves as cofactor.

It is found in the cytoplasm. Functionally, one of several proteins that assist in the late maturation steps of the functional core of the 30S ribosomal subunit. Helps release RbfA from mature subunits. May play a role in the assembly of ribosomal proteins into the subunit. Circularly permuted GTPase that catalyzes slow GTP hydrolysis, GTPase activity is stimulated by the 30S ribosomal subunit. The polypeptide is Small ribosomal subunit biogenesis GTPase RsgA (Streptococcus mutans serotype c (strain ATCC 700610 / UA159)).